Here is a 328-residue protein sequence, read N- to C-terminus: Carbonic anhydrase-related protein 11 (328 aa).

The signal sequence occupies residues 1–22 (MGAAARLSAPRALVLWAALGAA). Residues 33–303 (DWWSYKDNLQ…LAHRALRGNR (271 aa)) enclose the Alpha-carbonic anhydrase domain. Asn118, Asn170, and Asn260 each carry an N-linked (GlcNAc...) asparagine glycan. Residues 300–328 (RGNRDPRHPERRCRGPNYRLHVDGAPHGR) are disordered. Residues 319-328 (LHVDGAPHGR) show a composition bias toward basic and acidic residues.

The protein belongs to the alpha-carbonic anhydrase family.

It is found in the secreted. Functionally, does not have a catalytic activity. This chain is Carbonic anhydrase-related protein 11 (CA11), found in Bos taurus (Bovine).